A 132-amino-acid chain; its full sequence is Fatty acid-binding protein, intestinal (132 aa).

Ala2 carries the post-translational modification N-acetylalanine. Hexadecanoate contacts are provided by Trp83 and Arg107. Residues Trp83 and Arg107 each contribute to the tetradecanoate site.

It belongs to the calycin superfamily. Fatty-acid binding protein (FABP) family.

Its subcellular location is the cytoplasm. In terms of biological role, FABPs are thought to play a role in the intracellular transport of long-chain fatty acids and their acyl-CoA esters. This chain is Fatty acid-binding protein, intestinal (fabp2), found in Xenopus laevis (African clawed frog).